A 436-amino-acid chain; its full sequence is AP-2 complex subunit mu-B (436 aa).

The MHD domain maps to 170–435; that stretch reads RNELFLDVLE…IGRSGIYETR (266 aa). The a 1,2-diacyl-sn-glycero-3-phospho-(1D-myo-inositol-3,4,5-trisphosphate) site is built by Lys342, Lys346, and Lys355.

This sequence belongs to the adaptor complexes medium subunit family. Adaptor protein complex 2 (AP-2) is a heterotetramer composed of two large adaptins (alpha-type subunit and beta-type subunit), a medium adaptin (mu-type subunit) and a small adaptin (sigma-type subunit).

It localises to the cell membrane. The protein localises to the membrane. The protein resides in the coated pit. Component of the adaptor complexes which link clathrin to receptors in coated vesicles. Clathrin-associated protein complexes are believed to interact with the cytoplasmic tails of membrane proteins, leading to their selection and concentration. AP50 is a subunit of the plasma membrane adaptor. The complex binds polyphosphoinositide-containing lipids. This chain is AP-2 complex subunit mu-B (ap2m1b), found in Danio rerio (Zebrafish).